Reading from the N-terminus, the 377-residue chain is MSNAKDNFNVADLTAALNAEDRDDLVNVLKNKLQGLTGKHSNVLENLSPNVRKRVEVLREIQTQHDELEAKFFEERAALEAKYQKQYQPLYAKRSEIVNGVVEVDGEATQTAAADEEEDKDSVEKGVPDFWVTAMKNNEVLAEEITERDEGALKFLKDIKWSRIENPKGFKLEFFFETNPYFTNTVLTKTYHMIDEDEPILEKAIGTEIEWHPGKCLTQKILKKKPKKGSKNSKPITKIEQCESFFNFFSPPQVPDDEEDIDEDAAEELQNLMEQDYDIGSTIRDKIIPHAVSWFTGEAAQDEDYIDLEDDEDEEDDEDEDEDEEDEEEEDEDEDDDDEDEHVTKTKKKSSAGRKRSGGAPAADGQPGERPPECKQQ.

The stretch at 26–80 (VNVLKNKLQGLTGKHSNVLENLSPNVRKRVEVLREIQTQHDELEAKFFEERAALE) forms a coiled coil. Residues 47-62 (LSPNVRKRVEVLREIQ) carry the Nuclear export signal motif. A Nuclear localization signal motif is present at residues 223–228 (KKKPKK). The disordered stretch occupies residues 298–377 (EAAQDEDYID…GERPPECKQQ (80 aa)). Positions 300-341 (AQDEDYIDLEDDEDEEDDEDEDEDEEDEEEEDEDEDDDDEDE) are enriched in acidic residues. A compositionally biased stretch (basic residues) spans 345 to 357 (KTKKKSSAGRKRS). C374 carries the post-translational modification Cysteine methyl ester. Residue C374 is the site of S-farnesyl cysteine attachment. The propeptide at 375-377 (KQQ) is removed in mature form.

The protein belongs to the nucleosome assembly protein (NAP) family. In terms of assembly, can form homomeric and heteromeric protein complexes with NAP1;4. Binds histones H2A and H2B in vivo. Also able to bind histones H1 and H4 in vitro. Interacts with CYCB1;1 and with alpha tubulin.

It is found in the nucleus. The protein localises to the cytoplasm. Its function is as follows. May modulate chromatin structure by regulation of nucleosome assembly/disassembly. Could function together with B-type cyclins in the regulation of microtubule dynamics. The protein is Nucleosome assembly protein 1;3 (NAP1;3) of Nicotiana tabacum (Common tobacco).